We begin with the raw amino-acid sequence, 512 residues long: Colistin resistance protein EmrB (512 aa).

The next 14 membrane-spanning stretches (helical) occupy residues 17-37 (WAIF…IQIV), 55-75 (VTWV…MSSI), 84-104 (VYYT…ALSW), 115-135 (IQGF…YLLF), 144-164 (LVMF…IGGW), 169-189 (FSWH…ATVI), 205-225 (SMDW…EYFL), 234-254 (LADT…MIFF), 280-300 (ITTF…PVFL), 314-334 (VMMV…WLIP), 341-361 (TVFV…HLSI), 376-396 (GIGL…TLPL), 412-432 (IGGA…TAMH), and 486-506 (FNDL…LTIF).

Belongs to the major facilitator superfamily. EmrB family.

It is found in the cell inner membrane. Its function is as follows. Probably part of an efflux pump system that contributes to adaptation to osmotic stress and resistance to colistin. This is Colistin resistance protein EmrB from Acinetobacter baumannii (strain ATCC 17978 / DSM 105126 / CIP 53.77 / LMG 1025 / NCDC KC755 / 5377).